A 393-amino-acid polypeptide reads, in one-letter code: Serpin-Z4 (393 aa).

An RCL region spans residues 342–366; the sequence is GTEAAAVSVASMTKDMLLMGDFVAD.

This sequence belongs to the serpin family.

Probable serine protease inhibitor. The protein is Serpin-Z4 of Arabidopsis thaliana (Mouse-ear cress).